Here is a 342-residue protein sequence, read N- to C-terminus: Metalloendoproteinase 4-MMP (342 aa).

The N-terminal stretch at 1–34 (MHHHHHPCNRKPFTTIFSFFLLYLNLHNQQIIEA) is a signal peptide. Residues 35–124 (RNPSQFTTNP…KTAPFHTGKK (90 aa)) constitute a propeptide, activation peptide. A Cysteine switch motif is present at residues 104-111 (PRCGFPDD). Residues C106 and H252 each coordinate Zn(2+). Residue E253 is part of the active site. The Zn(2+) site is built by H256 and H262. The N-linked (GlcNAc...) asparagine glycan is linked to N300. D317 is lipidated: GPI-anchor amidated aspartate. Residues 318-342 (GSRIRSQGMIYSTLSTVIALCFLNW) constitute a propeptide, removed in mature form.

The protein belongs to the peptidase M10A family. Matrix metalloproteinases (MMPs) subfamily. Zn(2+) is required as a cofactor. Mostly expressed in flowers and stems, and, to a lower extent, in leaves and roots.

It localises to the cell membrane. Its activity is regulated as follows. Repressed by acetohydroxamic acid (AHA). In terms of biological role, matrix metalloproteinases (MMPs) or matrixins may play a role in the degradation and remodeling of the extracellular matrix (ECM) during development or in response to stresses. Active on myelin basic protein (MBP) and, to some extent, on McaPLGLDpaAR-NH(2) (QF24) and beta-casein. In Arabidopsis thaliana (Mouse-ear cress), this protein is Metalloendoproteinase 4-MMP.